Reading from the N-terminus, the 293-residue chain is 4-hydroxy-tetrahydrodipicolinate synthase (293 aa).

T47 is a binding site for pyruvate. Catalysis depends on Y135, which acts as the Proton donor/acceptor. K163 (schiff-base intermediate with substrate) is an active-site residue. Residue V205 participates in pyruvate binding.

It belongs to the DapA family. Homotetramer; dimer of dimers.

The protein localises to the cytoplasm. The catalysed reaction is L-aspartate 4-semialdehyde + pyruvate = (2S,4S)-4-hydroxy-2,3,4,5-tetrahydrodipicolinate + H2O + H(+). It participates in amino-acid biosynthesis; L-lysine biosynthesis via DAP pathway; (S)-tetrahydrodipicolinate from L-aspartate: step 3/4. Functionally, catalyzes the condensation of (S)-aspartate-beta-semialdehyde [(S)-ASA] and pyruvate to 4-hydroxy-tetrahydrodipicolinate (HTPA). The sequence is that of 4-hydroxy-tetrahydrodipicolinate synthase from Leptothrix cholodnii (strain ATCC 51168 / LMG 8142 / SP-6) (Leptothrix discophora (strain SP-6)).